The chain runs to 202 residues: Imidazole glycerol phosphate synthase subunit HisH (202 aa).

In terms of domain architecture, Glutamine amidotransferase type-1 spans 3–202; it reads RIVILDYGLG…KILKNFVDMC (200 aa). Cys79 acts as the Nucleophile in catalysis. Residues His183 and Glu185 contribute to the active site.

Heterodimer of HisH and HisF.

It is found in the cytoplasm. The enzyme catalyses 5-[(5-phospho-1-deoxy-D-ribulos-1-ylimino)methylamino]-1-(5-phospho-beta-D-ribosyl)imidazole-4-carboxamide + L-glutamine = D-erythro-1-(imidazol-4-yl)glycerol 3-phosphate + 5-amino-1-(5-phospho-beta-D-ribosyl)imidazole-4-carboxamide + L-glutamate + H(+). It catalyses the reaction L-glutamine + H2O = L-glutamate + NH4(+). The protein operates within amino-acid biosynthesis; L-histidine biosynthesis; L-histidine from 5-phospho-alpha-D-ribose 1-diphosphate: step 5/9. Functionally, IGPS catalyzes the conversion of PRFAR and glutamine to IGP, AICAR and glutamate. The HisH subunit catalyzes the hydrolysis of glutamine to glutamate and ammonia as part of the synthesis of IGP and AICAR. The resulting ammonia molecule is channeled to the active site of HisF. This Methanosarcina barkeri (strain Fusaro / DSM 804) protein is Imidazole glycerol phosphate synthase subunit HisH.